Consider the following 79-residue polypeptide: CDC42 small effector protein 1 (79 aa).

S-palmitoyl cysteine attachment occurs at residues Cys-10 and Cys-11. In terms of domain architecture, CRIB spans 30 to 43 (IGEPMNFVHLTHIG). The disordered stretch occupies residues 48–79 (GAGDGLAMTGAVQEQMRSKGNRDRPWSNSRAL). The segment covering 63–72 (MRSKGNRDRP) has biased composition (basic and acidic residues).

It belongs to the CDC42SE/SPEC family. As to quaternary structure, interacts with CDC42 (in GTP-bound form). Interacts weakly with RAC1 and not at all with RHOA.

It localises to the cytoplasm. The protein localises to the cytoskeleton. The protein resides in the cell membrane. Functionally, probably involved in the organization of the actin cytoskeleton by acting downstream of CDC42, inducing actin filament assembly. Alters CDC42-induced cell shape changes. In activated T-cells, may play a role in CDC42-mediated F-actin accumulation at the immunological synapse. May play a role in early contractile events in phagocytosis in macrophages. This is CDC42 small effector protein 1 (Cdc42se1) from Rattus norvegicus (Rat).